The sequence spans 433 residues: Serine hydroxymethyltransferase (433 aa).

Residues leucine 132 and 136–138 (GHL) each bind (6S)-5,6,7,8-tetrahydrofolate. Lysine 241 is modified (N6-(pyridoxal phosphate)lysine).

Belongs to the SHMT family. In terms of assembly, homodimer. Pyridoxal 5'-phosphate serves as cofactor.

The protein resides in the cytoplasm. The enzyme catalyses (6R)-5,10-methylene-5,6,7,8-tetrahydrofolate + glycine + H2O = (6S)-5,6,7,8-tetrahydrofolate + L-serine. It functions in the pathway one-carbon metabolism; tetrahydrofolate interconversion. Its pathway is amino-acid biosynthesis; glycine biosynthesis; glycine from L-serine: step 1/1. Functionally, catalyzes the reversible interconversion of serine and glycine with tetrahydrofolate (THF) serving as the one-carbon carrier. This reaction serves as the major source of one-carbon groups required for the biosynthesis of purines, thymidylate, methionine, and other important biomolecules. Also exhibits THF-independent aldolase activity toward beta-hydroxyamino acids, producing glycine and aldehydes, via a retro-aldol mechanism. In Bradyrhizobium sp. (strain ORS 278), this protein is Serine hydroxymethyltransferase.